The following is a 115-amino-acid chain: Holo-[acyl-carrier-protein] synthase (115 aa).

Mg(2+) contacts are provided by aspartate 5 and glutamate 51.

It belongs to the P-Pant transferase superfamily. AcpS family. Mg(2+) is required as a cofactor.

The protein resides in the cytoplasm. It catalyses the reaction apo-[ACP] + CoA = holo-[ACP] + adenosine 3',5'-bisphosphate + H(+). In terms of biological role, transfers the 4'-phosphopantetheine moiety from coenzyme A to a Ser of acyl-carrier-protein. The sequence is that of Holo-[acyl-carrier-protein] synthase from Helicobacter acinonychis (strain Sheeba).